The primary structure comprises 104 residues: Circadian clock oscillator protein KaiB (104 aa).

Belongs to the KaiB family. In terms of assembly, the KaiABC complex composition changes during the circadian cycle to control KaiC phosphorylation. Complexes KaiC(6), KaiA(2-4):KaiC(6), KaiB(6):KaiC(6) and KaiC(6):KaiB(6):KaiA(12) are among the most important forms, many form cooperatively. Undergoes a major conformational rearrangment; in the free state forms homotetramers as a dimer of dimers. When bound to the CI domain of KaiC switches to a monomeric thioredoxin-fold (KaiB(fs)). KaiB(fs) binds CikA, leading it to dephosphorylate phospho-RpaA.

Its function is as follows. Key component of the KaiABC oscillator complex, which constitutes the main circadian regulator in cyanobacteria. Complex composition changes during the circadian cycle to control KaiC phosphorylation. KaiA stimulates KaiC autophosphorylation, while KaiB sequesters KaiA, leading to KaiC autodephosphorylation. Phospho-Ser-431 KaiC accumulation triggers binding of KaiB to form the KaiB(6):KaiC(6) complex, leading to changes in output regulators CikA and SasA. KaiB switches to a thioredoxin-like fold (KaiB(fs)) when bound to KaiC. KaiB(6):KaiC(6) formation exposes a site for KaiA binding that sequesters KaiA from KaiC, making the KaiC(6):KaiB(6):KaiA(12) complex that results in KaiC autodephosphorylation. A metamorphic protein which reversibly switches between an inactive tetrameric fold and a rare, thioredoxin-like monomeric fold (KaiB(fs)). KaiB(fs) binds phospho-KaiC, KaiA and CikA. KaiA and CikA compete for binding to KaiB(fs), and KaiB(fs) and SasA compete for binding to KaiC, thus the clock oscillator and output signal pathway are tightly coupled. This is Circadian clock oscillator protein KaiB from Picosynechococcus sp. (strain ATCC 27264 / PCC 7002 / PR-6) (Agmenellum quadruplicatum).